The chain runs to 501 residues: Lysine--tRNA ligase (501 aa).

Glutamate 404 and glutamate 411 together coordinate Mg(2+).

This sequence belongs to the class-II aminoacyl-tRNA synthetase family. In terms of assembly, homodimer. It depends on Mg(2+) as a cofactor.

It localises to the cytoplasm. The enzyme catalyses tRNA(Lys) + L-lysine + ATP = L-lysyl-tRNA(Lys) + AMP + diphosphate. The polypeptide is Lysine--tRNA ligase (Campylobacter jejuni subsp. jejuni serotype O:6 (strain 81116 / NCTC 11828)).